A 511-amino-acid chain; its full sequence is MEELKGYLEIDRSRQQDFLYPLLFQEYIYALAHDHGLNGSILYEPIENLGYVGYDKKSSSLVVKRLITRMYQQKHLVFFDNDPNQNKFVDHKKNFYSQMISEGFAVIVEIPFSLRLVSSLEGKDITKSHNLRSIHSTFPFLEDQFSHLNHVLDILIPYPIHLELLIQLLRCWIQDAPSLHLLRVLLYEYQNWNSLITKKKKNFSVFSNENQRLFLFLYNFYVYECESIFVFLRKQSVHLRSTSSRAFLERTHFYRKIENFIVVFRNVFQTNLWLFKDPFMHYVRYQGKSILASKGTPLLMNKWKYYLVNFWQCHFYLWSQPDRIHINQLSNHSLDFLGHLSSVRLKTSVVRSQTLDNSFIIDIAIKKFDTIVPIIPLIGSLAKAKFCNVSGHPISKPAWTDSSDSDIIDRFGRICRNLSHYYSGSSKKNSLYRVKYILRLSCARTLSRKHKSTVRSFLKRLGSKLLEEFLTEEEQVLSLIFPRVSSSSRRLDKERIWYLDIIRINDLANHS.

Belongs to the intron maturase 2 family. MatK subfamily.

It is found in the plastid. The protein resides in the chloroplast. Its function is as follows. Usually encoded in the trnK tRNA gene intron. Probably assists in splicing its own and other chloroplast group II introns. This Nandina domestica (Heavenly bamboo) protein is Maturase K.